We begin with the raw amino-acid sequence, 49 residues long: DNA-directed RNA polymerase subunit Rpo12 (49 aa).

Positions 11, 27, and 30 each coordinate Zn(2+).

It belongs to the archaeal Rpo12/eukaryotic RPC10 RNA polymerase subunit family. In terms of assembly, part of the RNA polymerase complex. Zn(2+) serves as cofactor.

Its subcellular location is the cytoplasm. The enzyme catalyses RNA(n) + a ribonucleoside 5'-triphosphate = RNA(n+1) + diphosphate. In terms of biological role, DNA-dependent RNA polymerase (RNAP) catalyzes the transcription of DNA into RNA using the four ribonucleoside triphosphates as substrates. In Pyrococcus furiosus (strain ATCC 43587 / DSM 3638 / JCM 8422 / Vc1), this protein is DNA-directed RNA polymerase subunit Rpo12.